We begin with the raw amino-acid sequence, 135 residues long: Holo-[acyl-carrier-protein] synthase (135 aa).

The Mg(2+) site is built by aspartate 8 and glutamate 57.

The protein belongs to the P-Pant transferase superfamily. AcpS family. Mg(2+) serves as cofactor.

The protein resides in the cytoplasm. It carries out the reaction apo-[ACP] + CoA = holo-[ACP] + adenosine 3',5'-bisphosphate + H(+). Transfers the 4'-phosphopantetheine moiety from coenzyme A to a Ser of acyl-carrier-protein. This chain is Holo-[acyl-carrier-protein] synthase, found in Methylobacterium sp. (strain 4-46).